Here is a 242-residue protein sequence, read N- to C-terminus: ATP synthase subunit b 2 (242 aa).

A helical membrane pass occupies residues 4-24; that stretch reads LLAISSLTLLASLVLLVVSPA. Positions 43 to 74 are disordered; sequence ADSEDGDHDHDHEGDDHGHDEAAGDEHGHGDG. Basic and acidic residues predominate over residues 49-74; it reads DHDHDHEGDDHGHDEAAGDEHGHGDG.

It belongs to the ATPase B chain family. In terms of assembly, F-type ATPases have 2 components, F(1) - the catalytic core - and F(0) - the membrane proton channel. F(1) has five subunits: alpha(3), beta(3), gamma(1), delta(1), epsilon(1). F(0) has three main subunits: a(1), b(2) and c(10-14). The alpha and beta chains form an alternating ring which encloses part of the gamma chain. F(1) is attached to F(0) by a central stalk formed by the gamma and epsilon chains, while a peripheral stalk is formed by the delta and b chains.

It localises to the cell inner membrane. Its function is as follows. F(1)F(0) ATP synthase produces ATP from ADP in the presence of a proton or sodium gradient. F-type ATPases consist of two structural domains, F(1) containing the extramembraneous catalytic core and F(0) containing the membrane proton channel, linked together by a central stalk and a peripheral stalk. During catalysis, ATP synthesis in the catalytic domain of F(1) is coupled via a rotary mechanism of the central stalk subunits to proton translocation. In terms of biological role, component of the F(0) channel, it forms part of the peripheral stalk, linking F(1) to F(0). The protein is ATP synthase subunit b 2 of Rhodopirellula baltica (strain DSM 10527 / NCIMB 13988 / SH1).